Reading from the N-terminus, the 168-residue chain is Large ribosomal subunit protein uL5 (168 aa).

This sequence belongs to the universal ribosomal protein uL5 family. As to quaternary structure, part of the 50S ribosomal subunit; contacts the 5S rRNA and probably tRNA. Forms a bridge to the 30S subunit in the 70S ribosome.

Functionally, this is one of the proteins that bind and probably mediate the attachment of the 5S RNA into the large ribosomal subunit, where it forms part of the central protuberance. In the 70S ribosome it contacts protein S13 of the 30S subunit (bridge B1b), connecting the 2 subunits; this bridge is implicated in subunit movement. May contact the P site tRNA; the 5S rRNA and some of its associated proteins might help stabilize positioning of ribosome-bound tRNAs. The polypeptide is Large ribosomal subunit protein uL5 (Methanospirillum hungatei JF-1 (strain ATCC 27890 / DSM 864 / NBRC 100397 / JF-1)).